A 1201-amino-acid chain; its full sequence is Zinc finger protein sdc-1 (1201 aa).

7 C2H2-type zinc fingers span residues 117 to 139, 145 to 168, 233 to 254, 268 to 290, 486 to 513, 521 to 543, and 652 to 674; these read LTCA…RGVH, YMCQ…RTSC, SSCH…GNVH, YFCH…WRLH, IVCH…LLRH, YHCA…INDC, and VVCF…DYCH. A disordered region spans residues 1164–1201; it reads KRRNSETREHELIELDTDDLNEPSTSDGRYSFGHHGYR. Positions 1167–1176 are enriched in basic and acidic residues; the sequence is NSETREHELI.

As to quaternary structure, component of the SDC complex, which consists of sdc-1, sdc-2 and sdc-3. Within the complex, interacts with sdc-2 and sdc-3.

It is found in the nucleus. It localises to the chromosome. In terms of biological role, embryonic transcription factor regulating downstream genes involved specifically in the sex determination and dosage compensation pathways, or regulating other genes involved in the coordinate control of both processes. Component of the SDC complex that functions in sex determination and in X chromosome dosage compensation specifically in hermaphrodite (XX) animals. Involved in the recruitment of the condensin I-like dosage compensation complex to the male sex-determining autosomal gene her-1, thereby contributing to its repression and initiating hermaphrodite sexual development. Similarly, might contribute to X-linked gene repression through recruitment of the dosage compensation complex to the X chromosomes in hermaphrodites. Seems to be involved in the depletion of histone H4 lysine 16 acetylation (H4K16ac) on dosage compensated X chromosomes. Plays a role in developmental rate and body fat regulation downstream of the TOR complex 2 pathway. The sequence is that of Zinc finger protein sdc-1 (sdc-1) from Caenorhabditis elegans.